The following is a 327-amino-acid chain: Dipeptide transport ATP-binding protein DppD (327 aa).

The ABC transporter domain occupies 4 to 254 (LNVDKLSVHF…PRHPYTQALL (251 aa)). An ATP-binding site is contributed by 40–47 (GESGSGKS).

Belongs to the ABC transporter superfamily. In terms of assembly, the complex is composed of two ATP-binding proteins (DppD and DppF), two transmembrane proteins (DppB and DppC) and a solute-binding protein (DppA). MppA can replace DppA as binding protein for heme and ALA transport.

Its subcellular location is the cell inner membrane. The enzyme catalyses a dipeptide(out) + ATP + H2O = a dipeptide(in) + ADP + phosphate + H(+). Part of the ABC transporter DppABCDF involved in dipeptide transport. Responsible for energy coupling to the transport system. Its function is as follows. When a foreign outer membrane heme receptor is expressed in E.coli, DppABCDF can also transport heme and its precursor, 5-aminolevulinic acid (ALA), from the periplasm into the cytoplasm. The protein is Dipeptide transport ATP-binding protein DppD (dppD) of Escherichia coli (strain K12).